The following is a 101-amino-acid chain: Small ribosomal subunit protein uS14 (101 aa).

The protein belongs to the universal ribosomal protein uS14 family. Part of the 30S ribosomal subunit. Contacts proteins S3 and S10.

Its function is as follows. Binds 16S rRNA, required for the assembly of 30S particles and may also be responsible for determining the conformation of the 16S rRNA at the A site. The sequence is that of Small ribosomal subunit protein uS14 from Janthinobacterium sp. (strain Marseille) (Minibacterium massiliensis).